A 338-amino-acid chain; its full sequence is Ketol-acid reductoisomerase (NADP(+)) (338 aa).

The region spanning 1 to 181 (MNVYYDKDCD…GGGRSGIIET (181 aa)) is the KARI N-terminal Rossmann domain. NADP(+) contacts are provided by residues 24 to 27 (YGSQ), R47, S50, S52, and 82 to 85 (DEFQ). The active site involves H107. Position 133 (G133) interacts with NADP(+). The KARI C-terminal knotted domain occupies 182-327 (TFKDETETDL…AKLRGMMPWI (146 aa)). Residues D190, E194, E226, and E230 each coordinate Mg(2+). S251 is a substrate binding site.

The protein belongs to the ketol-acid reductoisomerase family. It depends on Mg(2+) as a cofactor.

It catalyses the reaction (2R)-2,3-dihydroxy-3-methylbutanoate + NADP(+) = (2S)-2-acetolactate + NADPH + H(+). It carries out the reaction (2R,3R)-2,3-dihydroxy-3-methylpentanoate + NADP(+) = (S)-2-ethyl-2-hydroxy-3-oxobutanoate + NADPH + H(+). It participates in amino-acid biosynthesis; L-isoleucine biosynthesis; L-isoleucine from 2-oxobutanoate: step 2/4. The protein operates within amino-acid biosynthesis; L-valine biosynthesis; L-valine from pyruvate: step 2/4. Functionally, involved in the biosynthesis of branched-chain amino acids (BCAA). Catalyzes an alkyl-migration followed by a ketol-acid reduction of (S)-2-acetolactate (S2AL) to yield (R)-2,3-dihydroxy-isovalerate. In the isomerase reaction, S2AL is rearranged via a Mg-dependent methyl migration to produce 3-hydroxy-3-methyl-2-ketobutyrate (HMKB). In the reductase reaction, this 2-ketoacid undergoes a metal-dependent reduction by NADPH to yield (R)-2,3-dihydroxy-isovalerate. This chain is Ketol-acid reductoisomerase (NADP(+)), found in Psychrobacter cryohalolentis (strain ATCC BAA-1226 / DSM 17306 / VKM B-2378 / K5).